A 290-amino-acid chain; its full sequence is Formamidopyrimidine-DNA glycosylase (290 aa).

Pro2 acts as the Schiff-base intermediate with DNA in catalysis. The active-site Proton donor is Glu3. The Proton donor; for beta-elimination activity role is filled by Lys58. His97, Arg122, and Lys165 together coordinate DNA. An FPG-type; atypical zinc finger spans residues 250 to 290; sequence KVYGREGEPCPGCDCDPVRTGGIARIVQSGRSTFYCPRHQR. The Proton donor; for delta-elimination activity role is filled by Arg280.

The protein belongs to the FPG family. Monomer. Zn(2+) is required as a cofactor.

It carries out the reaction Hydrolysis of DNA containing ring-opened 7-methylguanine residues, releasing 2,6-diamino-4-hydroxy-5-(N-methyl)formamidopyrimidine.. The enzyme catalyses 2'-deoxyribonucleotide-(2'-deoxyribose 5'-phosphate)-2'-deoxyribonucleotide-DNA = a 3'-end 2'-deoxyribonucleotide-(2,3-dehydro-2,3-deoxyribose 5'-phosphate)-DNA + a 5'-end 5'-phospho-2'-deoxyribonucleoside-DNA + H(+). In terms of biological role, involved in base excision repair of DNA damaged by oxidation or by mutagenic agents. Acts as a DNA glycosylase that recognizes and removes damaged bases. Has a preference for oxidized purines, such as 7,8-dihydro-8-oxoguanine (8-oxoG). Has AP (apurinic/apyrimidinic) lyase activity and introduces nicks in the DNA strand. Cleaves the DNA backbone by beta-delta elimination to generate a single-strand break at the site of the removed base with both 3'- and 5'-phosphates. The polypeptide is Formamidopyrimidine-DNA glycosylase (Rhodospirillum centenum (strain ATCC 51521 / SW)).